The following is a 434-amino-acid chain: MGIKNLKSLLLENKSLTILDDNLYKVYNGIFVDTMSIYIAVANCVRNLEELTTVFIKYVNGWVKKGGHVTLFIDRGSIKIKQDVRDKRRKYSKLTKDRKMLELEKCTSEIQNVTGFMEEEIKAEMQLKIDKLTFQIYLSDSDNIKISLNEILTHFNNNENVTLFYCDERDAEFVMCLEAKTHFSTTGEWPLIISTDQDTMLFASTDNHPKMIKNLTQLFKFVPSAEDNYLAKLTALVNGCDFFPGLYGASITPNNLNKIQLFSDFTIDNIVTSLAIKNYYRKTNSTVDVRNIVTFINDYANLDDVYSYVPPCQCTVQEFIFSALDEKWNNFKSSYLETVPLPCQLMYALEPRKEIDVSEVKTLSSYIDFENTKSDIDVIKSISSIFGYSNENCNTIVFGIYKDNLLLSINNSFYFNDSLLITNTKSDNIINIGY.

D33, D74, E168, D170, D196, and D198 together coordinate Mg(2+).

This sequence belongs to the XPG/RAD2 endonuclease family. FEN1 subfamily. The cofactor is Mg(2+).

The protein localises to the virion. In terms of biological role, putative nuclease that seems to be required for double-strand break repair, homologous recombination, and production of full-length viral genomic DNA. The protein is Putative nuclease OPG089 (OPG089) of Vaccinia virus (strain Copenhagen) (VACV).